Reading from the N-terminus, the 370-residue chain is GTPase Obg (370 aa).

The Obg domain occupies 1–159; sequence MKFVDEAYID…KKLKLELRVL (159 aa). The region spanning 160–333 is the OBG-type G domain; sequence ADVGLLGMPN…LVQAIYQHVA (174 aa). Residues 166-173, 191-195, 213-216, 283-286, and 314-316 contribute to the GTP site; these read GMPNAGKS, FTTLH, DVPG, NKLD, and SAL. Mg(2+) contacts are provided by Ser-173 and Thr-193. The interval 346-370 is disordered; that stretch reads FAEPEADESDDEPRFAPQADDPRFR.

This sequence belongs to the TRAFAC class OBG-HflX-like GTPase superfamily. OBG GTPase family. In terms of assembly, monomer. Mg(2+) is required as a cofactor.

It localises to the cytoplasm. Its function is as follows. An essential GTPase which binds GTP, GDP and possibly (p)ppGpp with moderate affinity, with high nucleotide exchange rates and a fairly low GTP hydrolysis rate. Plays a role in control of the cell cycle, stress response, ribosome biogenesis and in those bacteria that undergo differentiation, in morphogenesis control. This Methylibium petroleiphilum (strain ATCC BAA-1232 / LMG 22953 / PM1) protein is GTPase Obg.